The primary structure comprises 122 residues: Phospholipase A2 crotoxin basic chain (122 aa).

7 disulfide bridges follow: C26–C115, C28–C44, C43–C95, C49–C122, C50–C88, C57–C81, and C75–C86. Ca(2+) contacts are provided by Y27, G29, and G31. H47 is a catalytic residue. D48 is a Ca(2+) binding site. D89 is an active-site residue.

Heterodimer of one acidic (CA also named crotapotin) and one basic (CB) subunits; non-covalently linked. Requires Ca(2+) as cofactor. Expressed by the venom gland.

It is found in the secreted. The enzyme catalyses a 1,2-diacyl-sn-glycero-3-phosphocholine + H2O = a 1-acyl-sn-glycero-3-phosphocholine + a fatty acid + H(+). Heterodimer CA-CB: Crotoxin is a potent presynaptic neurotoxin that possesses phospholipase A2 (PLA2) activity and exerts a lethal action by blocking neuromuscular transmission. It consists of a non-covalent association of a basic and weakly toxic PLA2 subunit (CB), with a small acidic, non-enzymatic and non-toxic subunit (CA also named crotapotin). The complex acts by binding to a specific 48-kDa protein (R48) receptor located on presynaptic membranes, forming a transient ternary complex CA-CB-R48, followed by dissociation of the CA-CB complex and release of the CA subunit. At equilibrium, only the CB subunits remain associated with the specific crotoxin receptor. In addition to neurotoxicity, crotoxin has been found to exert nephrotoxicity, and cardiovascular toxicity. Moreover, anti-inflammatory, immunomodulatory, anti-tumor and analgesic effects of crotoxin have also been reported. Its function is as follows. Monomer CB: The basic subunit of crotoxin is a snake venom phospholipase A2 (PLA2) that exhibits weak neurotoxicity and strong anticoagulant effects by binding to factor Xa (F10) and inhibiting the prothrombinase activity. In addition, it exerts myotoxicity, nephrotoxicity, and cardiovascular toxicity as well as anti-inflammatory, immunomodulatory, anti-tumor and analgesic effects. Also shows a strong antimicrobial activity against X.axonopodis passiforae (Gram-negative) which is completely dependent on the enzymatic activity. PLA2 catalyzes the calcium-dependent hydrolysis of the 2- acyl groups in 3-sn-phosphoglycerides. This chain is Phospholipase A2 crotoxin basic chain, found in Crotalus durissus collilineatus (Brazilian rattlesnake).